Here is a 167-residue protein sequence, read N- to C-terminus: Intermembrane phospholipid transport system binding protein MlaD (167 aa).

The Cytoplasmic segment spans residues 1–6 (MRQTIK). A helical; Signal-anchor for type II membrane protein membrane pass occupies residues 7–27 (YEFWVGLFLLLGIGALVFLGL). The Periplasmic segment spans residues 28-167 (RVANVQGFAE…GNEKSESTEQ (140 aa)). The segment at 40-118 (SYTVTATFDN…GEQYIALTMG (79 aa)) is MCE/MlaD.

The protein belongs to the MlaD family. As to quaternary structure, the complex is composed of two ATP-binding proteins (MlaF), two transmembrane proteins (MlaE), two cytoplasmic solute-binding proteins (MlaB) and six periplasmic solute-binding proteins (MlaD).

It is found in the cell inner membrane. Its function is as follows. Part of the ABC transporter complex MlaFEDB, which is involved in a phospholipid transport pathway that maintains lipid asymmetry in the outer membrane by retrograde trafficking of phospholipids from the outer membrane to the inner membrane. MlaD functions in substrate binding with strong affinity for phospholipids and modulates ATP hydrolytic activity of the complex. This Haemophilus influenzae (strain ATCC 51907 / DSM 11121 / KW20 / Rd) protein is Intermembrane phospholipid transport system binding protein MlaD.